Here is a 360-residue protein sequence, read N- to C-terminus: MLVWLAEHLAKLYTGFNVFSYLTFRAIVSLLTALVISLWMGPHMIAWLQRLQIGQVVRNEGPESHFSKRGTPTMGGVMILVAIIVSVLMWANLSNPYVWCVLLVLAGYGAVGFVDDYRKVVRKDTKGLIARWKYFWQSVIALVVAFTMYSIGKDTPATQLVVPFFKDVMPQLGLLYVALAYFVIVGTSNAVNLTDGLDGLAIMPTVFVAAGFALVAWATGNMNFAGYLHIPYIRHASELVIVCTAIVGAGLGFLWFNTYPAQVFMGDVGSLALGGALGTIAVLLRQEFLLVIMGGVFVVETLSVILQVGSFKLRGQRIFRMAPIHHHYELKGWPEPRVIVRFWIISLMLVLIGLATLKVR.

A run of 10 helical transmembrane segments spans residues 27-47, 73-93, 94-114, 132-152, 168-188, 199-219, 236-256, 263-283, 288-308, and 338-358; these read IVSLLTALVISLWMGPHMIAW, TMGGVMILVAIIVSVLMWANL, SNPYVWCVLLVLAGYGAVGFV, WKYFWQSVIALVVAFTMYSIG, VMPQLGLLYVALAYFVIVGTS, GLAIMPTVFVAAGFALVAWAT, ASELVIVCTAIVGAGLGFLWF, VFMGDVGSLALGGALGTIAVL, FLLVIMGGVFVVETLSVILQV, and VIVRFWIISLMLVLIGLATLK.

The protein belongs to the glycosyltransferase 4 family. MraY subfamily. Mg(2+) is required as a cofactor.

It is found in the cell inner membrane. The enzyme catalyses UDP-N-acetyl-alpha-D-muramoyl-L-alanyl-gamma-D-glutamyl-meso-2,6-diaminopimeloyl-D-alanyl-D-alanine + di-trans,octa-cis-undecaprenyl phosphate = di-trans,octa-cis-undecaprenyl diphospho-N-acetyl-alpha-D-muramoyl-L-alanyl-D-glutamyl-meso-2,6-diaminopimeloyl-D-alanyl-D-alanine + UMP. It functions in the pathway cell wall biogenesis; peptidoglycan biosynthesis. In terms of biological role, catalyzes the initial step of the lipid cycle reactions in the biosynthesis of the cell wall peptidoglycan: transfers peptidoglycan precursor phospho-MurNAc-pentapeptide from UDP-MurNAc-pentapeptide onto the lipid carrier undecaprenyl phosphate, yielding undecaprenyl-pyrophosphoryl-MurNAc-pentapeptide, known as lipid I. The sequence is that of Phospho-N-acetylmuramoyl-pentapeptide-transferase from Pectobacterium atrosepticum (strain SCRI 1043 / ATCC BAA-672) (Erwinia carotovora subsp. atroseptica).